The sequence spans 482 residues: Cytochrome c-552 (482 aa).

An N-terminal signal peptide occupies residues 1-26 (MIKVSNALQRILIGAALALFGGGAQA). Heme c is bound at residue His-98. Heme is bound by residues Cys-126, Cys-129, and Lys-130. Heme c is bound by residues Cys-164, Cys-167, His-168, Cys-213, Cys-216, and His-217. Residues Glu-219, Tyr-220, Lys-265, and Gln-267 each coordinate Ca(2+). Tyr-220 provides a ligand contact to substrate. His-268 lines the substrate pocket. Heme c contacts are provided by His-279, Cys-286, Cys-289, His-290, His-305, Cys-318, Cys-321, His-322, and His-397.

It belongs to the cytochrome c-552 family. The cofactor is Ca(2+). It depends on heme c as a cofactor.

It is found in the periplasm. The enzyme catalyses 6 Fe(III)-[cytochrome c] + NH4(+) + 2 H2O = 6 Fe(II)-[cytochrome c] + nitrite + 8 H(+). It functions in the pathway nitrogen metabolism; nitrate reduction (assimilation). Catalyzes the reduction of nitrite to ammonia, consuming six electrons in the process. This is Cytochrome c-552 from Edwardsiella ictaluri (strain 93-146).